The chain runs to 515 residues: Mucin-like protein Glc1.8a (515 aa).

The signal sequence occupies residues 1-20; the sequence is MSQITLIILILAIGFSCTKS. Topologically, residues 21 to 467 are extracellular; the sequence is HPINSTRDGE…ANDIKKPAFP (447 aa). 28 N-linked (GlcNAc...) asparagine; by host glycosylation sites follow: Asn24, Asn45, Asn51, Asn60, Asn85, Asn93, Asn102, Asn123, Asn129, Asn138, Asn180, Asn201, Asn207, Asn216, Asn258, Asn279, Asn285, Asn319, Asn327, Asn336, Asn357, Asn363, Asn372, Asn397, Asn405, Asn413, Asn434, and Asn441. Residues 80-114 form a disordered region; that stretch reads SKKDENITGQSEINTSAKSQPINSTRDGEDSGTDL. The span at 86-104 shows a compositional bias: polar residues; that stretch reads ITGQSEINTSAKSQPINST. A disordered region spans residues 314-358; sequence SKKDENVTGQSEINTSAKSQPINSTRDGEDSGTDLKNLLTDPANT. The segment covering 320–338 has biased composition (polar residues); it reads VTGQSEINTSAKSQPINST. The interval 393–413 is disordered; sequence RKDENVTGQSEFNISTNSNLN. The chain crosses the membrane as a helical span at residues 468–488; sequence YCIILITFQIVTVGMIIYLVF. The Cytoplasmic segment spans residues 489-515; that stretch reads RTMRKPCQSERAIPLNTFGFGNNSSHE.

The protein belongs to the polydnaviridae Glc1.8 protein family.

Its subcellular location is the host membrane. Involved in suppression of the insect cellular immune response. Inhibits host hemocyte adhesion and phagocytosis. This Microplitis demolitor (Parasitoid wasp) protein is Mucin-like protein Glc1.8a (O9).